Consider the following 311-residue polypeptide: Retron Ec78 reverse transcriptase (311 aa).

The region spanning aspartate 15–isoleucine 241 is the Reverse transcriptase domain. Positions 96, 187, and 188 each coordinate Mg(2+).

It belongs to the bacterial reverse transcriptase family.

It catalyses the reaction DNA(n) + a 2'-deoxyribonucleoside 5'-triphosphate = DNA(n+1) + diphosphate. In terms of biological role, reverse transcriptase (RT) component of antiviral defense system retron Ec78, composed of a non-coding RNA (ncRNA), this reverse transcriptase (RT), a probable ATPase and a putative HNH endonuclease. Expression of retron Ec78 confers protection against bacteriophage T5. At multiplicity of infection (MOI) of 0.02 cultures slow growth when infected with T5 but do not collapse, at MOI 2 cultures enter growth stasis. Responsible for synthesis of msDNA-Ec78 (a linear ssDNA with a 5'-terminal phosphate residue). Unlike most known msDNAs the mature product does not have an RNA component. The retron transcript serves as primer and template for the reaction, and codes for the RT. Not mutagenic when cloned in E.coli. It is thought to be synthesized as a branched RNA with a 2',5'-phosphodiester linkage to ssDNA; the linkage is cleaved endonucleolytically by ExoVII (xseA-xseB) leaving the observed mature 5'-ssDNA terminus. Overexpression of the ncRNA and RT, which leads to increased levels of msDNA, is not mutagenic in vivo. As the stem in the msDNA does not have a mismatch it probably does not bind or sequester MutS and/or MutL. This chain is Retron Ec78 reverse transcriptase, found in Escherichia coli.